Reading from the N-terminus, the 91-residue chain is DNA-directed RNA polymerase subunit omega (91 aa).

Belongs to the RNA polymerase subunit omega family. The RNAP catalytic core consists of 2 alpha, 1 beta, 1 beta' and 1 omega subunit. When a sigma factor is associated with the core the holoenzyme is formed, which can initiate transcription.

The catalysed reaction is RNA(n) + a ribonucleoside 5'-triphosphate = RNA(n+1) + diphosphate. Its function is as follows. Promotes RNA polymerase assembly. Latches the N- and C-terminal regions of the beta' subunit thereby facilitating its interaction with the beta and alpha subunits. The sequence is that of DNA-directed RNA polymerase subunit omega from Shigella flexneri.